The chain runs to 506 residues: Histidine ammonia-lyase (506 aa).

A cross-link (5-imidazolinone (Ala-Gly)) is located at residues 143-145; sequence ASG. Residue Ser-144 is modified to 2,3-didehydroalanine (Ser).

It belongs to the PAL/histidase family. Contains an active site 4-methylidene-imidazol-5-one (MIO), which is formed autocatalytically by cyclization and dehydration of residues Ala-Ser-Gly.

It localises to the cytoplasm. It carries out the reaction L-histidine = trans-urocanate + NH4(+). The protein operates within amino-acid degradation; L-histidine degradation into L-glutamate; N-formimidoyl-L-glutamate from L-histidine: step 1/3. The sequence is that of Histidine ammonia-lyase from Citrobacter koseri (strain ATCC BAA-895 / CDC 4225-83 / SGSC4696).